A 149-amino-acid chain; its full sequence is NPC intracellular cholesterol transporter 2 (149 aa).

Residues 1–19 (MRFLAATILLLALVAASQA) form the signal peptide. 3 disulfide bridges follow: Cys-27-Cys-140, Cys-42-Cys-47, and Cys-93-Cys-99. N-linked (GlcNAc...) asparagine glycosylation is found at Asn-58 and Asn-69. Lys-116 is modified (N6-acetyllysine).

The protein belongs to the NPC2 family. As to quaternary structure, interacts with NPC1 (via the second lumenal domain) in a cholestrol-dependent manner. Interacts with NUS1/NgBR, the interaction stabilizes NCP2 and regulates cholesterol trafficking. Interacts with DHDDS. Interacts with NEDD4L (via C2 domain). Interacts with NPC1L1. N-glycosylated. In terms of tissue distribution, detected in liver and bile. Detected in epididymis (at protein level). Detected in caput epididymis, corpus epididymis, cauda epididymis and ovary.

It is found in the secreted. The protein localises to the endoplasmic reticulum. Its subcellular location is the lysosome. The catalysed reaction is cholesterol(in) = cholesterol(out). Intracellular cholesterol transporter which acts in concert with NPC1 and plays an important role in the egress of cholesterol from the lysosomal compartment. Unesterified cholesterol that has been released from LDLs in the lumen of the late endosomes/lysosomes is transferred by NPC2 to the cholesterol-binding pocket in the N-terminal domain of NPC1. May bind and mobilize cholesterol that is associated with membranes. NPC2 binds cholesterol with a 1:1 stoichiometry. Can bind a variety of sterols, including lathosterol, desmosterol and the plant sterols stigmasterol and beta-sitosterol. The secreted form of NCP2 regulates biliary cholesterol secretion via stimulation of ABCG5/ABCG8-mediated cholesterol transport. This chain is NPC intracellular cholesterol transporter 2, found in Mus musculus (Mouse).